The chain runs to 720 residues: MSLSDADHELVVEEIGREPTRAEAALFENLWSEHCAYRSSRPLLSAFDSEGDQVVIGPGDDAAVVSLPSHGDGEEMYITMGVESHNHPSYVDPFDGAATGVGGIVRDTLSMGAYPIALADCLYFGDFDREHSRYLFEGVVEGISHYGNCIGVPTVTGSVAFHDDYEGNPLVNVSCIGLLEPERTITAEAQEPGNKLVLVGNATGRDGLGGASFASEDLAEDAETEDRPAVQVGDPYSEKLLVECNEALLDEELVESARDLGAAGLGGASSELIAKGGLGARIELDRVHEREPNMNAMEYLLAESQERMVYEVAPEDVDRVAELAERFDLGCSVIGELTEPGTNYVCTFEGETVVDVDAAFLGDGAPMNDLPSDAPPKQERDLPTVSLDEAFERIVSSPNCASKRWVYRQYDHEVQVRTSVLPGDDAALLAIREAGTGLAFSAGADPNWTDAAPYEGARAVALENATNVAAKGATPHAAVDCLNGGNPEKPDVYGGFKGIVDGLADMCSDLDVPVVGGNVSLYNDSQDGPIPPTPTLALVGVKEGYDAPPLSLSGEGRLVVVGDTALEGKTDPRLGGSEYTAQFGGTDRFPALPVDSTDVVETIAEVADADHVLASHDVSHGGLAVTLAEMVHEDAGASVEIGTTEHGTPARLLFNERPGRVVFETTDPAAVREAFDGVAPVTELGEANDSNGLDITVNDETLAYNVADIADLRSVIDDEL.

Residue His34 is part of the active site. Tyr37 is a binding site for ATP. Residue Glu83 coordinates Mg(2+). Substrate contacts are provided by residues 84-87 (SHNH) and Arg106. The active-site Proton acceptor is the His85. Asp107 is a binding site for Mg(2+). Position 231 (Gln231) interacts with substrate. Mg(2+) is bound at residue Asp259. 303–305 (ESQ) provides a ligand contact to substrate. ATP contacts are provided by Asp480 and Gly517. Residue Asn518 participates in Mg(2+) binding. Ser520 provides a ligand contact to substrate.

Belongs to the FGAMS family. In terms of assembly, monomer. Part of the FGAM synthase complex composed of 1 PurL, 1 PurQ and 2 PurS subunits.

The protein resides in the cytoplasm. The catalysed reaction is N(2)-formyl-N(1)-(5-phospho-beta-D-ribosyl)glycinamide + L-glutamine + ATP + H2O = 2-formamido-N(1)-(5-O-phospho-beta-D-ribosyl)acetamidine + L-glutamate + ADP + phosphate + H(+). It participates in purine metabolism; IMP biosynthesis via de novo pathway; 5-amino-1-(5-phospho-D-ribosyl)imidazole from N(2)-formyl-N(1)-(5-phospho-D-ribosyl)glycinamide: step 1/2. In terms of biological role, part of the phosphoribosylformylglycinamidine synthase complex involved in the purines biosynthetic pathway. Catalyzes the ATP-dependent conversion of formylglycinamide ribonucleotide (FGAR) and glutamine to yield formylglycinamidine ribonucleotide (FGAM) and glutamate. The FGAM synthase complex is composed of three subunits. PurQ produces an ammonia molecule by converting glutamine to glutamate. PurL transfers the ammonia molecule to FGAR to form FGAM in an ATP-dependent manner. PurS interacts with PurQ and PurL and is thought to assist in the transfer of the ammonia molecule from PurQ to PurL. The chain is Phosphoribosylformylglycinamidine synthase subunit PurL from Haloarcula marismortui (strain ATCC 43049 / DSM 3752 / JCM 8966 / VKM B-1809) (Halobacterium marismortui).